The primary structure comprises 338 residues: High mobility group B protein 9 (338 aa).

The ARID domain maps to 38–129; that stretch reads VKDSSVFWDT…LLFHYEQVHL (92 aa). Positions 233–259 are disordered; that stretch reads TGRRRRRLGKRRRSRRREDPNYPKPNR. Residues 235 to 247 show a composition bias toward basic residues; that stretch reads RRRRRLGKRRRSR. The segment at residues 255–322 is a DNA-binding region (HMG box); sequence PKPNRSGYNF…RYQRELNEYR (68 aa).

As to expression, predominantly expressed in leaves, flowers and seedlings.

The protein resides in the nucleus. Binds preferentially DNA with A/T-rich content. Required for karyogamy during female gametophyte development, when the two polar nuclei fuse to form the diploid central cell nucleus. The sequence is that of High mobility group B protein 9 (HMGB9) from Arabidopsis thaliana (Mouse-ear cress).